The sequence spans 238 residues: Thrombin-like enzyme AhV_TL-I (238 aa).

The Peptidase S1 domain maps to 1–229 (IIGGDECNIN…HLDWIENIIA (229 aa)). 6 disulfides stabilise this stretch: cysteine 7-cysteine 141, cysteine 28-cysteine 44, cysteine 76-cysteine 236, cysteine 120-cysteine 190, cysteine 152-cysteine 169, and cysteine 180-cysteine 205. Residue histidine 43 is the Charge relay system of the active site. Residue asparagine 81 is glycosylated (N-linked (GlcNAc...) asparagine). The Charge relay system role is filled by aspartate 88. The active-site Charge relay system is the serine 184.

The protein belongs to the peptidase S1 family. Snake venom subfamily. In terms of assembly, monomer. Post-translationally, N-glycosylated at Asn-81 by a disaccharide composed of two N-acetylglucosamine (NAG). The presence of this N-glycan deforms the enzyme and Removing the carbohydrate moiety increases the esterase activity, but induces a complete loss of contractile response on mouse thoracic aorta. In terms of tissue distribution, expressed by the venom gland.

It localises to the secreted. With respect to regulation, inhibited by PMSF, L-cysteine and partially by SBTI and leupeptin. In terms of biological role, thrombin-like enzyme that shows fibrinogenolytic activity against both the Aalpha (FGA) and Bbeta (FGB) chains of bovine fibrinogen. This enzyme has poor esterolytic activity upon BAEE substrate. It induces mouse thoracic aortic ring contraction with EC(50)=147 nmol/L. It shows vasoconstrictor effects that are independent of the enzymatic activity, but related to the release of calcium ions form the calcium store, potentially through the activation of ryanodine receptors. This chain is Thrombin-like enzyme AhV_TL-I, found in Gloydius halys (Chinese water mocassin).